Consider the following 597-residue polypeptide: Elongation factor 4 (597 aa).

In terms of domain architecture, tr-type G spans 2–184 (KNIRNFSIIA…EVVNKIPPPK (183 aa)). GTP contacts are provided by residues 14–19 (DHGKST) and 131–134 (NKID).

This sequence belongs to the TRAFAC class translation factor GTPase superfamily. Classic translation factor GTPase family. LepA subfamily.

The protein resides in the cell inner membrane. It carries out the reaction GTP + H2O = GDP + phosphate + H(+). Required for accurate and efficient protein synthesis under certain stress conditions. May act as a fidelity factor of the translation reaction, by catalyzing a one-codon backward translocation of tRNAs on improperly translocated ribosomes. Back-translocation proceeds from a post-translocation (POST) complex to a pre-translocation (PRE) complex, thus giving elongation factor G a second chance to translocate the tRNAs correctly. Binds to ribosomes in a GTP-dependent manner. The chain is Elongation factor 4 from Chromobacterium violaceum (strain ATCC 12472 / DSM 30191 / JCM 1249 / CCUG 213 / NBRC 12614 / NCIMB 9131 / NCTC 9757 / MK).